A 603-amino-acid chain; its full sequence is Probable methyltransferase PMT20 (603 aa).

Residues 1–16 (MKSGKQSSQPEKGTSR) lie on the Cytoplasmic side of the membrane. The helical; Signal-anchor for type II membrane protein transmembrane segment at 17–37 (ILSLTVLFIAFCGFSFYLGGI) threads the bilayer. Over 38–603 (FCSERDKIVA…KLWFSSNQTS (566 aa)) the chain is Lumenal. N-linked (GlcNAc...) asparagine glycosylation is found at asparagine 313 and asparagine 600.

It belongs to the methyltransferase superfamily.

It is found in the golgi apparatus membrane. The polypeptide is Probable methyltransferase PMT20 (Arabidopsis thaliana (Mouse-ear cress)).